A 262-amino-acid polypeptide reads, in one-letter code: Small ribosomal subunit protein uS2 (262 aa).

It belongs to the universal ribosomal protein uS2 family.

The polypeptide is Small ribosomal subunit protein uS2 (Borrelia garinii subsp. bavariensis (strain ATCC BAA-2496 / DSM 23469 / PBi) (Borreliella bavariensis)).